Here is a 247-residue protein sequence, read N- to C-terminus: Carboxy-S-adenosyl-L-methionine synthase (247 aa).

S-adenosyl-L-methionine-binding positions include Y40, 65–67 (GSS), 90–91 (DN), 122–123 (DI), N137, and R204.

Belongs to the class I-like SAM-binding methyltransferase superfamily. Cx-SAM synthase family. Homodimer.

The catalysed reaction is prephenate + S-adenosyl-L-methionine = carboxy-S-adenosyl-L-methionine + 3-phenylpyruvate + H2O. Its function is as follows. Catalyzes the conversion of S-adenosyl-L-methionine (SAM) to carboxy-S-adenosyl-L-methionine (Cx-SAM). The chain is Carboxy-S-adenosyl-L-methionine synthase from Pseudomonas syringae pv. syringae (strain B728a).